The sequence spans 35 residues: Sperm-specific protein Phi-1 (35 aa).

Basic residues-rich tracts occupy residues proline 1–serine 17 and alanine 25–lysine 35. The segment at proline 1–lysine 35 is disordered.

As to expression, sperm.

The protein localises to the nucleus. The protein resides in the chromosome. Involved in nuclear basic protein transition: histones are replaced by spermatid specific proteins which are themselves replaced by protamines in late spermatids. This chain is Sperm-specific protein Phi-1, found in Mytilus californianus (California mussel).